Consider the following 107-residue polypeptide: Anti-adapter protein IraM (107 aa).

This sequence belongs to the IraM/RssC family.

Its subcellular location is the cytoplasm. In terms of biological role, inhibits RpoS proteolysis by regulating RssB activity, thereby increasing the stability of the sigma stress factor RpoS during magnesium starvation. The chain is Anti-adapter protein IraM from Shigella sonnei (strain Ss046).